Reading from the N-terminus, the 370-residue chain is Aminomethyltransferase (370 aa).

This sequence belongs to the GcvT family. As to quaternary structure, the glycine cleavage system is composed of four proteins: P, T, L and H.

The enzyme catalyses N(6)-[(R)-S(8)-aminomethyldihydrolipoyl]-L-lysyl-[protein] + (6S)-5,6,7,8-tetrahydrofolate = N(6)-[(R)-dihydrolipoyl]-L-lysyl-[protein] + (6R)-5,10-methylene-5,6,7,8-tetrahydrofolate + NH4(+). Its function is as follows. The glycine cleavage system catalyzes the degradation of glycine. This is Aminomethyltransferase from Clostridium botulinum (strain 657 / Type Ba4).